A 154-amino-acid chain; its full sequence is Myoglobin (154 aa).

A Globin domain is found at 2-148; sequence GLSEAEWQLV…FRKDIAAKYK (147 aa). Position 4 is a phosphoserine (Ser-4). His-65 lines the nitrite pocket. His-65 is a binding site for O2. Thr-68 is modified (phosphothreonine). Residue His-94 coordinates heme b.

The protein belongs to the globin family. Monomeric.

It is found in the cytoplasm. Its subcellular location is the sarcoplasm. It carries out the reaction Fe(III)-heme b-[protein] + nitric oxide + H2O = Fe(II)-heme b-[protein] + nitrite + 2 H(+). The catalysed reaction is H2O2 + AH2 = A + 2 H2O. Its function is as follows. Monomeric heme protein which primary function is to store oxygen and facilitate its diffusion within muscle tissues. Reversibly binds oxygen through a pentacoordinated heme iron and enables its timely and efficient release as needed during periods of heightened demand. Depending on the oxidative conditions of tissues and cells, and in addition to its ability to bind oxygen, it also has a nitrite reductase activity whereby it regulates the production of bioactive nitric oxide. Under stress conditions, like hypoxia and anoxia, it also protects cells against reactive oxygen species thanks to its pseudoperoxidase activity. This Indopacetus pacificus (Longman's beaked whale) protein is Myoglobin (MB).